A 179-amino-acid polypeptide reads, in one-letter code: Large ribosomal subunit protein uL6 (179 aa).

Belongs to the universal ribosomal protein uL6 family. Part of the 50S ribosomal subunit.

In terms of biological role, this protein binds to the 23S rRNA, and is important in its secondary structure. It is located near the subunit interface in the base of the L7/L12 stalk, and near the tRNA binding site of the peptidyltransferase center. The protein is Large ribosomal subunit protein uL6 of Leptospira borgpetersenii serovar Hardjo-bovis (strain JB197).